Here is a 45-residue protein sequence, read N- to C-terminus: Photosystem II reaction center protein K (45 aa).

Positions 1–8 (MNSALFLA) are excised as a propeptide. The chain crosses the membrane as a helical span at residues 23–43 (ILPVIPVFFLLLAFVWQAAIG).

Belongs to the PsbK family. PSII is composed of 1 copy each of membrane proteins PsbA, PsbB, PsbC, PsbD, PsbE, PsbF, PsbH, PsbI, PsbJ, PsbK, PsbL, PsbM, PsbT, PsbX, PsbY, PsbZ, Psb30/Ycf12, at least 3 peripheral proteins of the oxygen-evolving complex and a large number of cofactors. It forms dimeric complexes.

The protein localises to the plastid. The protein resides in the chloroplast thylakoid membrane. Its function is as follows. One of the components of the core complex of photosystem II (PSII). PSII is a light-driven water:plastoquinone oxidoreductase that uses light energy to abstract electrons from H(2)O, generating O(2) and a proton gradient subsequently used for ATP formation. It consists of a core antenna complex that captures photons, and an electron transfer chain that converts photonic excitation into a charge separation. The protein is Photosystem II reaction center protein K of Porphyra purpurea (Red seaweed).